A 226-amino-acid polypeptide reads, in one-letter code: ATP synthase F(0) complex subunit a (226 aa).

A run of 6 helical transmembrane segments spans residues 12–32 (PTIL…LLIP), 68–88 (WSLM…LGLL), 97–117 (QLSM…ATGF), 138–158 (IPML…ALAV), 164–184 (ITAG…LSTI), and 200–222 (TTLE…SLYL).

Belongs to the ATPase A chain family. As to quaternary structure, component of the ATP synthase complex composed at least of ATP5F1A/subunit alpha, ATP5F1B/subunit beta, ATP5MC1/subunit c (homooctomer), MT-ATP6/subunit a, MT-ATP8/subunit 8, ATP5ME/subunit e, ATP5MF/subunit f, ATP5MG/subunit g, ATP5MK/subunit k, ATP5MJ/subunit j, ATP5F1C/subunit gamma, ATP5F1D/subunit delta, ATP5F1E/subunit epsilon, ATP5PF/subunit F6, ATP5PB/subunit b, ATP5PD/subunit d, ATP5PO/subunit OSCP. ATP synthase complex consists of a soluble F(1) head domain (subunits alpha(3) and beta(3)) - the catalytic core - and a membrane F(0) domain - the membrane proton channel (subunits c, a, 8, e, f, g, k and j). These two domains are linked by a central stalk (subunits gamma, delta, and epsilon) rotating inside the F1 region and a stationary peripheral stalk (subunits F6, b, d, and OSCP). Interacts with DNAJC30; interaction is direct.

It is found in the mitochondrion inner membrane. It catalyses the reaction H(+)(in) = H(+)(out). In terms of biological role, subunit a, of the mitochondrial membrane ATP synthase complex (F(1)F(0) ATP synthase or Complex V) that produces ATP from ADP in the presence of a proton gradient across the membrane which is generated by electron transport complexes of the respiratory chain. ATP synthase complex consist of a soluble F(1) head domain - the catalytic core - and a membrane F(1) domain - the membrane proton channel. These two domains are linked by a central stalk rotating inside the F(1) region and a stationary peripheral stalk. During catalysis, ATP synthesis in the catalytic domain of F(1) is coupled via a rotary mechanism of the central stalk subunits to proton translocation. With the subunit c (ATP5MC1), forms the proton-conducting channel in the F(0) domain, that contains two crucial half-channels (inlet and outlet) that facilitate proton movement from the mitochondrial intermembrane space (IMS) into the matrix. Protons are taken up via the inlet half-channel and released through the outlet half-channel, following a Grotthuss mechanism. The protein is ATP synthase F(0) complex subunit a of Hylobates lar (Lar gibbon).